The primary structure comprises 86 residues: Small ribosomal subunit protein uS17 (86 aa).

It belongs to the universal ribosomal protein uS17 family. Part of the 30S ribosomal subunit.

One of the primary rRNA binding proteins, it binds specifically to the 5'-end of 16S ribosomal RNA. This chain is Small ribosomal subunit protein uS17, found in Caldicellulosiruptor bescii (strain ATCC BAA-1888 / DSM 6725 / KCTC 15123 / Z-1320) (Anaerocellum thermophilum).